The following is a 277-amino-acid chain: B3 domain-containing protein At3g19184 (277 aa).

The disordered stretch occupies residues 33–94; sequence QSLRVSSSSS…LERRPRRSSR (62 aa). The TF-B3 DNA-binding region spans 130 to 221; sequence FTKPMLQSHV…TFKVYIIRVN (92 aa). Acidic residues predominate over residues 224–250; that stretch reads ANNDSDGNEVNDDDSDGNEEDRDNDNE. The disordered stretch occupies residues 224–277; sequence ANNDSDGNEVNDDDSDGNEEDRDNDNESNEKQKETVSEGRQLRSSGKRKRRGRK. The span at 251-264 shows a compositional bias: basic and acidic residues; that stretch reads SNEKQKETVSEGRQ. Positions 268 to 277 are enriched in basic residues; it reads SGKRKRRGRK.

The protein resides in the nucleus. The chain is B3 domain-containing protein At3g19184 from Arabidopsis thaliana (Mouse-ear cress).